Consider the following 94-residue polypeptide: DNA-directed RNA polymerase subunit omega (94 aa).

It belongs to the RNA polymerase subunit omega family. The RNAP catalytic core consists of 2 alpha, 1 beta, 1 beta' and 1 omega subunit. When a sigma factor is associated with the core the holoenzyme is formed, which can initiate transcription.

The catalysed reaction is RNA(n) + a ribonucleoside 5'-triphosphate = RNA(n+1) + diphosphate. Functionally, promotes RNA polymerase assembly. Latches the N- and C-terminal regions of the beta' subunit thereby facilitating its interaction with the beta and alpha subunits. This is DNA-directed RNA polymerase subunit omega from Photobacterium profundum (strain SS9).